The primary structure comprises 485 residues: Protein hunchback (485 aa).

The interval Thr-1–Lys-77 is disordered. Polar residues predominate over residues Gln-16 to Asp-37. A compositionally biased stretch (acidic residues) spans Ala-59–Asp-72. C2H2-type zinc fingers lie at residues Tyr-87–His-109, Leu-116–His-138, Phe-144–His-166, and Tyr-172–His-196. Disordered regions lie at residues Lys-229 to Ser-270, Asn-318 to His-361, and Pro-398 to Ser-422. The segment covering Asn-257–Ser-270 has biased composition (polar residues). Residues Asn-325–Glu-335 show a composition bias toward acidic residues. Polar residues predominate over residues Asp-345–Gln-358. Over residues Gln-402–Thr-416 the composition is skewed to low complexity. C2H2-type zinc fingers lie at residues Tyr-432–His-454 and Phe-460–His-484.

It belongs to the hunchback C2H2-type zinc-finger protein family.

The protein resides in the nucleus. In terms of biological role, gap class segmentation protein that controls development of head structures. This chain is Protein hunchback (hb), found in Clogmia albipunctata (Mothmidge).